We begin with the raw amino-acid sequence, 238 residues long: Small proline-rich protein 3 (238 aa).

The tract at residues 1-67 (MSSYQQKQPF…CSTKVPEPGN (67 aa)) is disordered. N-acetylserine is present on S2. Repeat copies occupy residues 52-59 (TKIPEPCS), 60-67 (TKVPEPGN), 68-75 (TVVLEPDY), 76-83 (TTMPGPCS), 84-91 (TNITEPDY), 92-99 (TTIPGPCS), 100-107 (TNITEPDY), 108-115 (TTIPGPCS), 116-123 (TNIPGPDR), 124-131 (TVVPGSCS), 132-139 (TNITEPDY), 140-147 (TTIPGPSS), 148-155 (TKIPDPGC), 156-163 (AMVPGPSP), 164-175 (SSTSEPSSEPCS), 176-183 (INVREPGY), 184-191 (MNASEPTH), 192-199 (AKVPDQGY), 200-207 (TKIPDQGS), 208-215 (SKVPEPCQ), and 216-223 (SRVPEVCP). Residues 52–223 (TKIPEPCSTK…CQSRVPEVCP (172 aa)) form a 21 X 8 AA approximate tandem repeats region. Residues 110–238 (IPGPCSTNIP…VSAKQKTKQK (129 aa)) form a disordered region. Positions 163–175 (PSSTSEPSSEPCS) are enriched in low complexity.

The protein belongs to the cornifin (SPRR) family.

The protein resides in the cytoplasm. Cross-linked envelope protein of keratinocytes. The polypeptide is Small proline-rich protein 3 (Sprr3) (Mus musculus (Mouse)).